We begin with the raw amino-acid sequence, 701 residues long: Elongation factor G (701 aa).

The tr-type G domain maps to Thr-8–Lys-290. Residues Ala-17–Thr-24, Asp-88–His-92, and Asn-142–Asp-145 each bind GTP.

This sequence belongs to the TRAFAC class translation factor GTPase superfamily. Classic translation factor GTPase family. EF-G/EF-2 subfamily.

The protein localises to the cytoplasm. In terms of biological role, catalyzes the GTP-dependent ribosomal translocation step during translation elongation. During this step, the ribosome changes from the pre-translocational (PRE) to the post-translocational (POST) state as the newly formed A-site-bound peptidyl-tRNA and P-site-bound deacylated tRNA move to the P and E sites, respectively. Catalyzes the coordinated movement of the two tRNA molecules, the mRNA and conformational changes in the ribosome. In Buchnera aphidicola subsp. Cinara cedri (strain Cc), this protein is Elongation factor G.